Consider the following 878-residue polypeptide: MTEEYSNLRSNVSLLGQLLGKSIGGHLGEEFLDKIETIRQLSKSSRAGNQQDGVALIDMLTHLSDDELVPVARAFTHFLNLANIAEQFHGISRHCDSGVCAPEPIKDLISKFKNSNLSQQEMQQSVNELKMEMVLTAHPTEITRRTLIHKHIAINDCLSYLEISDISDKERDLLLNRLEQLITQAWHTNDIRQKRPTPVDEAKWGFATIEKSLWQAVPQFIRDLESELQSGLGLSLPLEASPITFTSWMGGDRDGNPFVTAKVTQEVLLSSRWVAVSLYLKDISQLTDELSMDNCDPALRSVVGDNAAEPYRAILRKLRSELKETLASLSATLQNQRSDEKDIITTSKQLKEPLLLCYHSLKNMGMNSIANGLILDILRRLNCFGINLLKLDIRQDAERHGNTLSELTRYLGIGDYNAWNEEDKQAFLLQELNNKRPLFPSQWNPSAEVQEVLDTCKVVAQTDPEALGIYIISMARQASDVLAVQLILKEVGCPFRIPVAPLFETLDDLNNSAAVMKRLFAIDWYRGYINGIQHVMIGYSDSAKDAGVIAANWAQYTSQEALVKLSAENDINLVLFHGRGGTIGRGGAPARQALLSQPPGSLKGGLRVTEQGEMIRFKFGLPKVAVQSLNQYAAAVLEANLLPPPAPKQEWRDVMQQFSDQSCQEYRHFVREEPDFVPYFRSVTPEVELGKLALGSRPSKRKPSGGIESLRAIPWIFAWSQNRLMLPAWLGAGTSLKTLLNEGKKPLLQEMYQHWPFFHTRLEMFEMVFLKADEELTKFYEERLVPKELWPLGQRLRDNLTLTRETVLETIPDHQLMQEQPWIKESISLRNPYVDPLNMLQAELLYRSRENGDEICPVVDQALMVTIAGIAAGLRNTG.

Residues H138 and K544 contribute to the active site.

This sequence belongs to the PEPCase type 1 family. The cofactor is Mg(2+).

It catalyses the reaction oxaloacetate + phosphate = phosphoenolpyruvate + hydrogencarbonate. In terms of biological role, forms oxaloacetate, a four-carbon dicarboxylic acid source for the tricarboxylic acid cycle. In Psychromonas ingrahamii (strain DSM 17664 / CCUG 51855 / 37), this protein is Phosphoenolpyruvate carboxylase.